Reading from the N-terminus, the 874-residue chain is Collagen alpha-2(I) chain (874 aa).

Positions 1-874 are disordered; sequence SGGFDFSFLP…FGYEGDFYRA (874 aa). 4-hydroxyproline is present on residues proline 10 and proline 13. Lysine 16 is modified (allysine). Over residues 27–66 the composition is skewed to low complexity; that stretch reads LMGPRGPPGASGAPGPQGFQGPAGEPGEPGQTGPAGARGP. A 4-hydroxyproline mark is found at proline 34 and proline 40. Lysine 93 carries the 5-hydroxylysine; alternate modification. Residue lysine 93 is glycosylated (O-linked (Gal...) hydroxylysine; alternate). 3 stretches are compositionally biased toward low complexity: residues 110 to 143, 188 to 209, and 218 to 236; these read ARGRVGAPGPAGARGSDGSVGPVGPAGPIGSAGP, PGANGLTGAKGAAGLPGVAGAP, and PGPVGARGLVGEPGPAGSK. The span at 237–246 shows a compositional bias: gly residues; sequence GESGGKGEPG. Residues 247 to 257 are compositionally biased toward low complexity; that stretch reads SAGPQGPPGSS. Residues proline 317 and proline 320 each carry the 4-hydroxyproline modification. 3 stretches are compositionally biased toward low complexity: residues 346–365, 434–451, and 463–473; these read LPGIDGRPGPIGPAGARGEA, PGESGAVGPSGAIGSRGP, and EPGVVGAPGTA. Over residues 474-483 the composition is skewed to gly residues; that stretch reads GPAGSGGLPG. Low complexity-rich tracts occupy residues 491 to 538 and 545 to 565; these read RGEV…PRGS and VGPAGPNGFAGPAGAAGQPGA. Basic and acidic residues predominate over residues 566–575; the sequence is KGERGTKGPK. The segment covering 583 to 593 has biased composition (low complexity); sequence PTGPVGSAGPA. A compositionally biased stretch (gly residues) spans 603–612; it reads GSRGDGGPPG. Residues 614–623 are compositionally biased toward low complexity; the sequence is TGFPGAAGRT. The segment covering 648–662 has biased composition (gly residues); sequence GPVGRGETGAGGPPG. 2 stretches are compositionally biased toward low complexity: residues 663 to 697 and 705 to 724; these read FTGEKGPSGEPGTAGPPGTAGPQGLLGAPGILGLP and LPGVAGAVGEPGPLGIAGPP. The span at 725–744 shows a compositional bias: gly residues; sequence GARGDGNPGSDGPPGRGAAG. Composition is skewed to low complexity over residues 745-755 and 763-778; these read APGPHGTVGPA and EPGPVGSVGPVGALGP.

The protein belongs to the fibrillar collagen family. As to quaternary structure, trimers of one alpha 2(I) and two alpha 1(I) chains. Interacts (via C-terminus) with TMEM131 (via PapD-L domain); the interaction is direct and is involved in assembly and TRAPPIII ER-to-Golgi transport complex-dependent secretion of collagen. In terms of processing, prolines at the third position of the tripeptide repeating unit (G-X-Y) are hydroxylated in some or all of the chains. Expressed in bones.

The protein resides in the secreted. Its subcellular location is the extracellular space. It localises to the extracellular matrix. Its function is as follows. Type I collagen is a member of group I collagen (fibrillar forming collagen). This Megalonyx jeffersonii (Jefferson's ground sloth) protein is Collagen alpha-2(I) chain.